Here is a 147-residue protein sequence, read N- to C-terminus: D-aminoacyl-tRNA deacylase (147 aa).

The Gly-cisPro motif, important for rejection of L-amino acids motif lies at 137–138; the sequence is GP.

It belongs to the DTD family. In terms of assembly, homodimer.

Its subcellular location is the cytoplasm. It catalyses the reaction glycyl-tRNA(Ala) + H2O = tRNA(Ala) + glycine + H(+). The catalysed reaction is a D-aminoacyl-tRNA + H2O = a tRNA + a D-alpha-amino acid + H(+). Its function is as follows. An aminoacyl-tRNA editing enzyme that deacylates mischarged D-aminoacyl-tRNAs. Also deacylates mischarged glycyl-tRNA(Ala), protecting cells against glycine mischarging by AlaRS. Acts via tRNA-based rather than protein-based catalysis; rejects L-amino acids rather than detecting D-amino acids in the active site. By recycling D-aminoacyl-tRNA to D-amino acids and free tRNA molecules, this enzyme counteracts the toxicity associated with the formation of D-aminoacyl-tRNA entities in vivo and helps enforce protein L-homochirality. This is D-aminoacyl-tRNA deacylase from Bacillus velezensis (strain DSM 23117 / BGSC 10A6 / LMG 26770 / FZB42) (Bacillus amyloliquefaciens subsp. plantarum).